The primary structure comprises 293 residues: Homoserine kinase (293 aa).

ATP is bound at residue 84-94; it reads PISRGLGSSSA.

It belongs to the GHMP kinase family. Homoserine kinase subfamily.

It is found in the cytoplasm. The catalysed reaction is L-homoserine + ATP = O-phospho-L-homoserine + ADP + H(+). Its pathway is amino-acid biosynthesis; L-threonine biosynthesis; L-threonine from L-aspartate: step 4/5. Its function is as follows. Catalyzes the ATP-dependent phosphorylation of L-homoserine to L-homoserine phosphate. The sequence is that of Homoserine kinase from Wolinella succinogenes (strain ATCC 29543 / DSM 1740 / CCUG 13145 / JCM 31913 / LMG 7466 / NCTC 11488 / FDC 602W) (Vibrio succinogenes).